The chain runs to 167 residues: Large ribosomal subunit protein uL10 (167 aa).

The protein belongs to the universal ribosomal protein uL10 family. In terms of assembly, part of the ribosomal stalk of the 50S ribosomal subunit. The N-terminus interacts with L11 and the large rRNA to form the base of the stalk. The C-terminus forms an elongated spine to which L12 dimers bind in a sequential fashion forming a multimeric L10(L12)X complex.

Its function is as follows. Forms part of the ribosomal stalk, playing a central role in the interaction of the ribosome with GTP-bound translation factors. The protein is Large ribosomal subunit protein uL10 of Mycoplasma mobile (strain ATCC 43663 / 163K / NCTC 11711) (Mesomycoplasma mobile).